A 207-amino-acid chain; its full sequence is Uracil phosphoribosyltransferase (207 aa).

Residues Arg-77, Arg-102, and Asp-129–Ser-137 each bind 5-phospho-alpha-D-ribose 1-diphosphate. Uracil contacts are provided by residues Ile-192 and Gly-197 to Ala-199. Asp-198 provides a ligand contact to 5-phospho-alpha-D-ribose 1-diphosphate.

It belongs to the UPRTase family. Mg(2+) serves as cofactor.

It carries out the reaction UMP + diphosphate = 5-phospho-alpha-D-ribose 1-diphosphate + uracil. Its pathway is pyrimidine metabolism; UMP biosynthesis via salvage pathway; UMP from uracil: step 1/1. Allosterically activated by GTP. Its function is as follows. Catalyzes the conversion of uracil and 5-phospho-alpha-D-ribose 1-diphosphate (PRPP) to UMP and diphosphate. The sequence is that of Uracil phosphoribosyltransferase from Mycoplasma mycoides subsp. mycoides SC (strain CCUG 32753 / NCTC 10114 / PG1).